Reading from the N-terminus, the 72-residue chain is Translation initiation factor IF-1 (72 aa).

Residues 1–72 form the S1-like domain; it reads MAKEELLEMR…TKGRITYRFK (72 aa).

The protein belongs to the IF-1 family. In terms of assembly, component of the 30S ribosomal translation pre-initiation complex which assembles on the 30S ribosome in the order IF-2 and IF-3, IF-1 and N-formylmethionyl-tRNA(fMet); mRNA recruitment can occur at any time during PIC assembly.

The protein localises to the cytoplasm. One of the essential components for the initiation of protein synthesis. Stabilizes the binding of IF-2 and IF-3 on the 30S subunit to which N-formylmethionyl-tRNA(fMet) subsequently binds. Helps modulate mRNA selection, yielding the 30S pre-initiation complex (PIC). Upon addition of the 50S ribosomal subunit IF-1, IF-2 and IF-3 are released leaving the mature 70S translation initiation complex. The chain is Translation initiation factor IF-1 from Sphingopyxis alaskensis (strain DSM 13593 / LMG 18877 / RB2256) (Sphingomonas alaskensis).